The primary structure comprises 436 residues: GTPase Der (436 aa).

2 consecutive EngA-type G domains span residues P4 to G167 and I176 to A351. GTP contacts are provided by residues G10 to S17, D57 to I61, N119 to D122, G182 to S189, D229 to M233, and N294 to D297. The KH-like domain maps to M352–K436.

This sequence belongs to the TRAFAC class TrmE-Era-EngA-EngB-Septin-like GTPase superfamily. EngA (Der) GTPase family. As to quaternary structure, associates with the 50S ribosomal subunit.

Functionally, GTPase that plays an essential role in the late steps of ribosome biogenesis. The sequence is that of GTPase Der from Geobacillus sp. (strain WCH70).